The chain runs to 469 residues: A-type ATP synthase subunit B 3 (469 aa).

This sequence belongs to the ATPase alpha/beta chains family. As to quaternary structure, has multiple subunits with at least A(3), B(3), C, D, E, F, H, I and proteolipid K(x).

The protein localises to the cell membrane. Component of the A-type ATP synthase that produces ATP from ADP in the presence of a proton gradient across the membrane. The B chain is a regulatory subunit. The protein is A-type ATP synthase subunit B 3 of Methanospirillum hungatei JF-1 (strain ATCC 27890 / DSM 864 / NBRC 100397 / JF-1).